The chain runs to 383 residues: Acetylornithine deacetylase (383 aa).

H80 serves as a coordination point for Zn(2+). D82 is an active-site residue. D112 serves as a coordination point for Zn(2+). E144 is a catalytic residue. Zn(2+) contacts are provided by E145, E169, and H355.

The protein belongs to the peptidase M20A family. ArgE subfamily. As to quaternary structure, homodimer. Zn(2+) is required as a cofactor. Requires Co(2+) as cofactor. The cofactor is glutathione.

Its subcellular location is the cytoplasm. It carries out the reaction N(2)-acetyl-L-ornithine + H2O = L-ornithine + acetate. Its pathway is amino-acid biosynthesis; L-arginine biosynthesis; L-ornithine from N(2)-acetyl-L-ornithine (linear): step 1/1. Its function is as follows. Catalyzes the hydrolysis of the amide bond of N(2)-acetylated L-amino acids. Cleaves the acetyl group from N-acetyl-L-ornithine to form L-ornithine, an intermediate in L-arginine biosynthesis pathway, and a branchpoint in the synthesis of polyamines. This chain is Acetylornithine deacetylase, found in Escherichia coli O139:H28 (strain E24377A / ETEC).